A 219-amino-acid polypeptide reads, in one-letter code: Putative ankyrin repeat protein BB_0399 (219 aa).

ANK repeat units follow at residues 104 to 133, 137 to 166, and 170 to 199; these read YKIS…SLNQ, TGYS…DLSF, and NRKT…YIDD.

This Borreliella burgdorferi (strain ATCC 35210 / DSM 4680 / CIP 102532 / B31) (Borrelia burgdorferi) protein is Putative ankyrin repeat protein BB_0399.